Reading from the N-terminus, the 968-residue chain is AP2-associated protein kinase 1 (968 aa).

Methionine 1 is modified (N-acetylmethionine). Over residues 1 to 11 (MKKFFDSRREQ) the composition is skewed to basic and acidic residues. The disordered stretch occupies residues 1 to 25 (MKKFFDSRREQGGSGLGSGSSGGGG). A compositionally biased stretch (gly residues) spans 12–25 (GGSGLGSGSSGGGG). Residue serine 14 is modified to Phosphoserine. The 270-residue stretch at 46–315 (VTVDEVLAEG…QVSFFSFKLL (270 aa)) folds into the Protein kinase domain. ATP contacts are provided by residues 52–60 (LAEGGFAIV) and lysine 74. Catalysis depends on aspartate 176, which acts as the Proton acceptor. Phosphotyrosine is present on tyrosine 234. Serine 235 is modified (phosphoserine). Disordered regions lie at residues 327-485 (SPIP…AQAP) and 578-640 (IQPP…AGHR). Phosphothreonine occurs at positions 354 and 389. Omega-N-methylarginine is present on arginine 391. Residues 437 to 448 (QAPPAPQQPPSA) show a composition bias toward pro residues. 2 stretches are compositionally biased toward low complexity: residues 449–472 (PAQG…LKQQ) and 578–589 (IQPPQAQPATAS). The residue at position 613 (threonine 613) is a Phosphothreonine. Residue serine 625 is modified to Phosphoserine. Threonine 627 bears the Phosphothreonine mark. 4 positions are modified to phosphoserine: serine 630, serine 631, serine 644, and serine 657. Threonine 660 carries the phosphothreonine modification. The disordered stretch occupies residues 671–708 (SLNKSKSATTTPSGSPRASQQNVYNPSEGSTWNPFDDD). Over residues 679–703 (TTTPSGSPRASQQNVYNPSEGSTWN) the composition is skewed to polar residues. Tyrosine 694 is subject to Phosphotyrosine. A phosphoserine mark is found at serine 738, serine 853, serine 944, and serine 945. Positions 830–967 (EKADVAVESL…SLLLVDQLID (138 aa)) are clathrin-binding domain (CBD). Disordered regions lie at residues 843–862 (LEPP…ASNR) and 929–952 (PVLI…ESSL). The segment covering 851–862 (LPSQTESVASNR) has biased composition (polar residues). The segment covering 938–951 (GGHSRNSSGSSESS) has biased composition (low complexity).

It belongs to the protein kinase superfamily. Ser/Thr protein kinase family. In terms of assembly, interacts (via CBD domain) with clathrin. Interacts with AP-2 complex. Interacts with NUMB. Interacts with alpha-adaptin. Interacts with EPS15. Interacts with membrane-bound activated NOTCH1 but not with the inactive full-length form of NOTCH1. Preferentially interacts with monoubiquitinated activated NOTCH1 compared to the non-ubiquitinated form. Post-translationally, autophosphorylated.

It is found in the cell membrane. The protein resides in the membrane. It localises to the clathrin-coated pit. Its subcellular location is the presynapse. The enzyme catalyses L-seryl-[protein] + ATP = O-phospho-L-seryl-[protein] + ADP + H(+). The catalysed reaction is L-threonyl-[protein] + ATP = O-phospho-L-threonyl-[protein] + ADP + H(+). Its activity is regulated as follows. Stimulated by clathrin. Regulates clathrin-mediated endocytosis by phosphorylating the AP2M1/mu2 subunit of the adaptor protein complex 2 (AP-2) which ensures high affinity binding of AP-2 to cargo membrane proteins during the initial stages of endocytosis. Preferentially, may phosphorylate substrates on threonine residues. Regulates phosphorylation of other AP-2 subunits as well as AP-2 localization and AP-2-mediated internalization of ligand complexes. Phosphorylates NUMB and regulates its cellular localization, promoting NUMB localization to endosomes. Binds to and stabilizes the activated form of NOTCH1, increases its localization in endosomes and regulates its transcriptional activity. The chain is AP2-associated protein kinase 1 (AAK1) from Sus scrofa (Pig).